The following is a 293-amino-acid chain: Probable E3 ubiquitin-protein ligase RNF144A-A (293 aa).

The tract at residues Pro-16–Leu-237 is TRIAD supradomain. Cys-20, Cys-23, Cys-43, Cys-46, Cys-111, Cys-116, Cys-135, Cys-138, Cys-143, Cys-146, His-151, Cys-156, Cys-186, and Cys-189 together coordinate Zn(2+). An RING-type 1 zinc finger spans residues Cys-20 to Cys-70. An IBR-type zinc finger spans residues Gln-91–Cys-156. The RING-type 2; atypical zinc-finger motif lies at Cys-186–Cys-215. Residue Cys-199 is part of the active site. 6 residues coordinate Zn(2+): Cys-204, Cys-207, Cys-212, Cys-215, His-227, and Cys-233. Residues Val-251–Leu-271 traverse the membrane as a helical segment.

The protein belongs to the RBR family. RNF144 subfamily.

The protein resides in the membrane. It catalyses the reaction [E2 ubiquitin-conjugating enzyme]-S-ubiquitinyl-L-cysteine + [acceptor protein]-L-lysine = [E2 ubiquitin-conjugating enzyme]-L-cysteine + [acceptor protein]-N(6)-ubiquitinyl-L-lysine.. The protein operates within protein modification; protein ubiquitination. In terms of biological role, E3 ubiquitin-protein ligase which accepts ubiquitin from E2 ubiquitin-conjugating enzymes ube2l3 and ube2l6 in the form of a thioester and then directly transfers the ubiquitin to targeted substrates. The polypeptide is Probable E3 ubiquitin-protein ligase RNF144A-A (rnf144aa) (Danio rerio (Zebrafish)).